Reading from the N-terminus, the 191-residue chain is Transcriptional activator GvpE1 (191 aa).

The interval 31–51 (SDGASDHADQPPDEGATQRYT) is disordered. 140 to 145 (KRKVYR) provides a ligand contact to DNA. The interval 150–181 (EGAFTRIDHMVDQLLLFSLVLKAVMTDCKARQ) is leucine-zipper.

Interacts with GvpD.

It localises to the cytoplasm. The amount of protein that accumulates is controlled by GvpD; GvpD causes a reduction in the amount of GvpE, preventing accumulation of excessive amounts of gas vesicles. Functionally, plays a regulatory role in gas vesicle synthesis, activates transcription of the gvpA operon, and probably of the gvpD operon. Gas vesicles are hollow, gas filled proteinaceous nanostructures found in several microbial planktonic microorganisms. They allow positioning of halobacteria at the optimal depth for growth in the poorly aerated, shallow brine pools of their habitat. Its function is as follows. Expression of a 9.5 kb p-vac DNA fragment containing 2 divergently transcribed regions (gvpD-gvpE-gvpF-gvpG-gvpH-gvpI-gvpJ-gvpK-gvpL-gvpM and gvpA-gvpC-gvpN-gvpO) allows H.volcanii to produce gas vesicles. A similar region restores gas vesicle production in H.halobium without the p-vac locus, but it still has the c-vac locus. The polypeptide is Transcriptional activator GvpE1 (gvpE11) (Halobacterium salinarum (strain ATCC 700922 / JCM 11081 / NRC-1) (Halobacterium halobium)).